A 226-amino-acid polypeptide reads, in one-letter code: Brachyurin (226 aa).

The region spanning 1-223 (IVGGVEAVPN…FLDWIQTQTG (223 aa)) is the Peptidase S1 domain. Cys-26 and Cys-42 are disulfide-bonded. Active-site charge relay system residues include His-41 and Asp-87. Intrachain disulfides connect Cys-151/Cys-164 and Cys-174/Cys-200. Catalysis depends on Ser-178, which acts as the Charge relay system.

The protein belongs to the peptidase S1 family.

It catalyses the reaction Hydrolysis of proteins, with broad specificity for peptide bonds. Native collagen is cleaved about 75% of the length of the molecule from the N-terminus. Low activity on small molecule substrates of both trypsin and chymotrypsin.. This enzyme is a serine protease capable of degrading the native triple helix of collagen. The polypeptide is Brachyurin (Leptuca pugilator (Atlantic sand fiddler crab)).